A 24-amino-acid chain; its full sequence is Brevinin-1PTa (24 aa).

Residues cysteine 18 and cysteine 24 are joined by a disulfide bond.

Expressed by the skin glands.

It localises to the secreted. Its function is as follows. Has antibacterial activity against the Gram-positive bacterium S.aureus ATCC 25923 (MIC=3 uM) and the Gram-negative bacterium E.coli ATCC 25726 (MIC=24 uM). This is Brevinin-1PTa from Pulchrana picturata (Malaysian fire frog).